The sequence spans 68 residues: Peptide Hp1090 (68 aa).

A signal peptide spans 1-23; that stretch reads MKTQFAIFLITLVLFQMFSQSDA. F36 carries the post-translational modification Phenylalanine amide. Positions 40–68 are excised as a propeptide; that stretch reads GLSDLDDLDESFDGEVSQADIDFLKELMQ.

This sequence belongs to the non-disulfide-bridged peptide (NDBP) superfamily. Short antimicrobial peptide (group 4) family. Expressed by the venom gland.

It localises to the secreted. Its subcellular location is the target cell membrane. Amphipathic peptide which inhibits the growth of Gram-positive bacteria. The sequence is that of Peptide Hp1090 from Heterometrus petersii (Asian forest scorpion).